Here is a 614-residue protein sequence, read N- to C-terminus: Beta-glucosidase 33 (614 aa).

The first 26 residues, 1–26 (MATATLTLFLGLLALTSTILSFNADA), serve as a signal peptide directing secretion. A beta-D-glucoside contacts are provided by residues glutamine 113, histidine 217, and 262–263 (NE). Glutamate 263 (proton donor) is an active-site residue. The cysteines at positions 282 and 290 are disulfide-linked. The N-linked (GlcNAc...) asparagine glycan is linked to asparagine 344. Tyrosine 407 is an a beta-D-glucoside binding site. N-linked (GlcNAc...) asparagine glycosylation is found at asparagine 419, asparagine 432, and asparagine 439. Residue glutamate 479 participates in a beta-D-glucoside binding. Catalysis depends on glutamate 479, which acts as the Nucleophile. A glycan (N-linked (GlcNAc...) asparagine) is linked at asparagine 491. Residues tryptophan 529, 536–537 (EW), and phenylalanine 545 contribute to the a beta-D-glucoside site.

It belongs to the glycosyl hydrolase 1 family.

The catalysed reaction is Hydrolysis of terminal, non-reducing beta-D-glucosyl residues with release of beta-D-glucose.. The polypeptide is Beta-glucosidase 33 (Arabidopsis thaliana (Mouse-ear cress)).